Reading from the N-terminus, the 340-residue chain is Deubiquitinase SseL (340 aa).

H223 is a catalytic residue. C285 functions as the Nucleophile in the catalytic mechanism.

It belongs to the peptidase C79 family.

It localises to the secreted. The protein localises to the host cytoplasm. In terms of biological role, effector proteins function to alter host cell physiology and promote bacterial survival in host tissues. This protease targets the host cell ubiquitin pathway by acting as a deubiquitinase in infected host cells. The protein is Deubiquitinase SseL (sseL) of Salmonella paratyphi A (strain ATCC 9150 / SARB42).